Consider the following 250-residue polypeptide: Triosephosphate isomerase (250 aa).

9–11 lines the substrate pocket; sequence NWK. Residue His-95 is the Electrophile of the active site. The active-site Proton acceptor is Glu-167. Substrate contacts are provided by residues Gly-173, Ser-213, and 234–235; that span reads GG.

This sequence belongs to the triosephosphate isomerase family. As to quaternary structure, homodimer.

It localises to the cytoplasm. It catalyses the reaction D-glyceraldehyde 3-phosphate = dihydroxyacetone phosphate. It participates in carbohydrate biosynthesis; gluconeogenesis. Its pathway is carbohydrate degradation; glycolysis; D-glyceraldehyde 3-phosphate from glycerone phosphate: step 1/1. Its function is as follows. Involved in the gluconeogenesis. Catalyzes stereospecifically the conversion of dihydroxyacetone phosphate (DHAP) to D-glyceraldehyde-3-phosphate (G3P). This chain is Triosephosphate isomerase, found in Flavobacterium johnsoniae (strain ATCC 17061 / DSM 2064 / JCM 8514 / BCRC 14874 / CCUG 350202 / NBRC 14942 / NCIMB 11054 / UW101) (Cytophaga johnsonae).